The following is a 599-amino-acid chain: Elongation factor 4 (599 aa).

The region spanning 5 to 187 (SHIRNFSIIA…RLVHTIPAPE (183 aa)) is the tr-type G domain. Residues 17 to 22 (DHGKST) and 134 to 137 (NKMD) each bind GTP.

The protein belongs to the TRAFAC class translation factor GTPase superfamily. Classic translation factor GTPase family. LepA subfamily.

The protein localises to the cell inner membrane. It carries out the reaction GTP + H2O = GDP + phosphate + H(+). Its function is as follows. Required for accurate and efficient protein synthesis under certain stress conditions. May act as a fidelity factor of the translation reaction, by catalyzing a one-codon backward translocation of tRNAs on improperly translocated ribosomes. Back-translocation proceeds from a post-translocation (POST) complex to a pre-translocation (PRE) complex, thus giving elongation factor G a second chance to translocate the tRNAs correctly. Binds to ribosomes in a GTP-dependent manner. This Pseudomonas putida (strain ATCC 47054 / DSM 6125 / CFBP 8728 / NCIMB 11950 / KT2440) protein is Elongation factor 4.